Reading from the N-terminus, the 350-residue chain is Hydroxymethylglutaryl-CoA synthase (350 aa).

Asp-30 is a (3S)-3-hydroxy-3-methylglutaryl-CoA binding site. Catalysis depends on Glu-82, which acts as the Proton donor/acceptor. Positions 114, 155, 203, and 236 each coordinate (3S)-3-hydroxy-3-methylglutaryl-CoA. The Acyl-thioester intermediate role is filled by Cys-114. His-236 acts as the Proton donor/acceptor in catalysis. Arg-241 serves as a coordination point for CoA. Arg-245, Asn-268, and Ser-298 together coordinate (3S)-3-hydroxy-3-methylglutaryl-CoA.

Belongs to the thiolase-like superfamily. Archaeal HMG-CoA synthase family. In terms of assembly, interacts with acetoacetyl-CoA thiolase that catalyzes the precedent step in the pathway and with a DUF35 protein. The acetoacetyl-CoA thiolase/HMG-CoA synthase complex channels the intermediate via a fused CoA-binding site, which allows for efficient coupling of the endergonic thiolase reaction with the exergonic HMGCS reaction.

It carries out the reaction acetoacetyl-CoA + acetyl-CoA + H2O = (3S)-3-hydroxy-3-methylglutaryl-CoA + CoA + H(+). Its pathway is metabolic intermediate biosynthesis; (R)-mevalonate biosynthesis; (R)-mevalonate from acetyl-CoA: step 2/3. Its function is as follows. Catalyzes the condensation of acetyl-CoA with acetoacetyl-CoA to form 3-hydroxy-3-methylglutaryl-CoA (HMG-CoA). Functions in the mevalonate (MVA) pathway leading to isopentenyl diphosphate (IPP), a key precursor for the biosynthesis of isoprenoid compounds that are building blocks of archaeal membrane lipids. The protein is Hydroxymethylglutaryl-CoA synthase of Pyrobaculum calidifontis (strain DSM 21063 / JCM 11548 / VA1).